A 408-amino-acid polypeptide reads, in one-letter code: Phosphoglycerate kinase (408 aa).

Substrate is bound by residues 24–26 (DLN), R40, 63–66 (HLGR), R122, and R166. ATP contacts are provided by residues K216, G304, E335, and 364 to 367 (GGDS).

The protein belongs to the phosphoglycerate kinase family. In terms of assembly, monomer.

Its subcellular location is the cytoplasm. It carries out the reaction (2R)-3-phosphoglycerate + ATP = (2R)-3-phospho-glyceroyl phosphate + ADP. The protein operates within carbohydrate degradation; glycolysis; pyruvate from D-glyceraldehyde 3-phosphate: step 2/5. This is Phosphoglycerate kinase from Mycolicibacterium smegmatis (strain ATCC 700084 / mc(2)155) (Mycobacterium smegmatis).